The following is a 180-amino-acid chain: Calcium-binding protein E (180 aa).

EF-hand domains follow at residues 3–38 (KVEAQIEKIFTSFDKDGDGNLSWDEVFSRMSSNSNI), 40–76 (DPLAATKSMFDHYNRDADTENLSIQEIREVLMSKKIK), 85–120 (ALRSKVKDFRKKYDTDNDGVVTFDEMYQLYLKDPDF), and 139–174 (RAKSSCRYFFSAVDKDKNDKLSYLEIHEYLKKHPEF). Ca(2+) contacts are provided by D16, D18, D20, N22, and E27. 9 residues coordinate Ca(2+): D98, D100, D102, E109, D152, D154, N156, K158, and E163.

This Dictyostelium discoideum (Social amoeba) protein is Calcium-binding protein E (cbpE).